Reading from the N-terminus, the 233-residue chain is uncharacterized protein (233 aa).

The protein belongs to the asfivirus H233R family.

This is an uncharacterized protein from African swine fever virus (isolate Tick/South Africa/Pretoriuskop Pr4/1996) (ASFV).